The primary structure comprises 92 residues: Small ribosomal subunit protein uS19 (92 aa).

The protein belongs to the universal ribosomal protein uS19 family.

Functionally, protein S19 forms a complex with S13 that binds strongly to the 16S ribosomal RNA. This Vibrio vulnificus (strain CMCP6) protein is Small ribosomal subunit protein uS19.